A 355-amino-acid chain; its full sequence is S-adenosylmethionine:tRNA ribosyltransferase-isomerase (355 aa).

Belongs to the QueA family. In terms of assembly, monomer.

Its subcellular location is the cytoplasm. The catalysed reaction is 7-aminomethyl-7-carbaguanosine(34) in tRNA + S-adenosyl-L-methionine = epoxyqueuosine(34) in tRNA + adenine + L-methionine + 2 H(+). Its pathway is tRNA modification; tRNA-queuosine biosynthesis. Functionally, transfers and isomerizes the ribose moiety from AdoMet to the 7-aminomethyl group of 7-deazaguanine (preQ1-tRNA) to give epoxyqueuosine (oQ-tRNA). The protein is S-adenosylmethionine:tRNA ribosyltransferase-isomerase of Aeromonas salmonicida (strain A449).